A 115-amino-acid chain; its full sequence is T cell receptor beta variable 7-8 (115 aa).

The signal sequence occupies residues 1 to 21 (MGTRLLCWVVLGFLGTDHTGA). The 94-residue stretch at 22–115 (GVSQSPRYKV…SAVYLCASSL (94 aa)) folds into the Ig-like domain. Cys-42 and Cys-111 form a disulfide bridge.

As to quaternary structure, alpha-beta TR is a heterodimer composed of an alpha and beta chain; disulfide-linked. The alpha-beta TR is associated with the transmembrane signaling CD3 coreceptor proteins to form the TR-CD3 (TcR or TCR). The assembly of alpha-beta TR heterodimers with CD3 occurs in the endoplasmic reticulum where a single alpha-beta TR heterodimer associates with one CD3D-CD3E heterodimer, one CD3G-CD3E heterodimer and one CD247 homodimer forming a stable octameric structure. CD3D-CD3E and CD3G-CD3E heterodimers preferentially associate with TR alpha and TR beta chains, respectively. The association of the CD247 homodimer is the last step of TcR assembly in the endoplasmic reticulum and is required for transport to the cell surface.

It localises to the cell membrane. In terms of biological role, v region of the variable domain of T cell receptor (TR) beta chain that participates in the antigen recognition. Alpha-beta T cell receptors are antigen specific receptors which are essential to the immune response and are present on the cell surface of T lymphocytes. Recognize peptide-major histocompatibility (MH) (pMH) complexes that are displayed by antigen presenting cells (APC), a prerequisite for efficient T cell adaptive immunity against pathogens. Binding of alpha-beta TR to pMH complex initiates TR-CD3 clustering on the cell surface and intracellular activation of LCK that phosphorylates the ITAM motifs of CD3G, CD3D, CD3E and CD247 enabling the recruitment of ZAP70. In turn ZAP70 phosphorylates LAT, which recruits numerous signaling molecules to form the LAT signalosome. The LAT signalosome propagates signal branching to three major signaling pathways, the calcium, the mitogen-activated protein kinase (MAPK) kinase and the nuclear factor NF-kappa-B (NF-kB) pathways, leading to the mobilization of transcription factors that are critical for gene expression and essential for T cell growth and differentiation. The T cell repertoire is generated in the thymus, by V-(D)-J rearrangement. This repertoire is then shaped by intrathymic selection events to generate a peripheral T cell pool of self-MH restricted, non-autoaggressive T cells. Post-thymic interaction of alpha-beta TR with the pMH complexes shapes TR structural and functional avidity. In Homo sapiens (Human), this protein is T cell receptor beta variable 7-8.